The chain runs to 81 residues: ATP synthase subunit c (81 aa).

2 helical membrane-spanning segments follow: residues 5–25 (IAAG…IGAG) and 57–77 (VGLV…FVFA).

This sequence belongs to the ATPase C chain family. In terms of assembly, F-type ATPases have 2 components, F(1) - the catalytic core - and F(0) - the membrane proton channel. F(1) has five subunits: alpha(3), beta(3), gamma(1), delta(1), epsilon(1). F(0) has three main subunits: a(1), b(2) and c(10-14). The alpha and beta chains form an alternating ring which encloses part of the gamma chain. F(1) is attached to F(0) by a central stalk formed by the gamma and epsilon chains, while a peripheral stalk is formed by the delta and b chains.

The protein localises to the cell membrane. F(1)F(0) ATP synthase produces ATP from ADP in the presence of a proton or sodium gradient. F-type ATPases consist of two structural domains, F(1) containing the extramembraneous catalytic core and F(0) containing the membrane proton channel, linked together by a central stalk and a peripheral stalk. During catalysis, ATP synthesis in the catalytic domain of F(1) is coupled via a rotary mechanism of the central stalk subunits to proton translocation. Functionally, key component of the F(0) channel; it plays a direct role in translocation across the membrane. A homomeric c-ring of between 10-14 subunits forms the central stalk rotor element with the F(1) delta and epsilon subunits. This chain is ATP synthase subunit c, found in Mycobacterium sp. (strain JLS).